The chain runs to 849 residues: ATP-binding cassette sub-family B member 6 (849 aa).

Residues M1 to P25 are Lumenal-facing. The required for the lysosomal targeting stretch occupies residues M1–R195. The interval M1–Q227 is required for ATPase activity. Cysteines 8 and 26 form a disulfide. N11 carries N-linked (GlcNAc...) asparagine glycosylation. A helical membrane pass occupies residues C26–L46. At Q47 to Q72 the chain is on the cytoplasmic side. The chain crosses the membrane as a helical span at residues I73–G93. Residues T94–Y98 lie on the Lumenal side of the membrane. Residues G99–L119 form a helical membrane-spanning segment. The Cytoplasmic portion of the chain corresponds to H120–G136. The helical transmembrane segment at V137 to W157 threads the bilayer. The Lumenal portion of the chain corresponds to Q158 to K173. A helical transmembrane segment spans residues V174–I194. The Cytoplasmic segment spans residues R195 to L254. The chain crosses the membrane as a helical span at residues L255 to I275. Residues V256 to S547 form the ABC transmembrane type-1 domain. Topologically, residues Y276–N291 are lumenal. A helical membrane pass occupies residues I292 to G312. Over T313 to S373 the chain is Cytoplasmic. The chain crosses the membrane as a helical span at residues L374–V394. Residues Y395–N401 lie on the Lumenal side of the membrane. A helical transmembrane segment spans residues A402–I422. Residues T423–Q492 lie on the Cytoplasmic side of the membrane. The chain crosses the membrane as a helical span at residues N493–E513. Residues N514–D520 lie on the Lumenal side of the membrane. The chain crosses the membrane as a helical span at residues Y521 to Y541. The Cytoplasmic portion of the chain corresponds to Y542–H849. The ABC transporter domain occupies I581–K815. Residues Y590 and G614–R625 contribute to the ATP site. Low complexity predominate over residues Q814–D825. Residues Q814–H849 form a disordered region. Basic and acidic residues predominate over residues D827 to E836.

Belongs to the ABC transporter superfamily. ABCB family. Heavy Metal importer (TC 3.A.1.210) subfamily. In terms of assembly, homodimer. N-glycosylated.

Its subcellular location is the cell membrane. It is found in the mitochondrion outer membrane. It localises to the endoplasmic reticulum membrane. The protein localises to the golgi apparatus membrane. The protein resides in the endosome membrane. Its subcellular location is the lysosome membrane. It is found in the late endosome membrane. It localises to the early endosome membrane. The protein localises to the secreted. The protein resides in the extracellular exosome. Its subcellular location is the mitochondrion. It is found in the endosome. It localises to the multivesicular body membrane. The protein localises to the melanosome membrane. It catalyses the reaction heme b(in) + ATP + H2O = heme b(out) + ADP + phosphate + H(+). The enzyme catalyses coproporphyrin III(in) + ATP + H2O = coproporphyrin III(out) + ADP + phosphate + H(+). The catalysed reaction is pheophorbide a(in) + ATP + H2O = pheophorbide a(out) + ADP + phosphate + H(+). It carries out the reaction coproporphyrinogen III(in) + ATP + H2O = coproporphyrinogen III(out) + ADP + phosphate + H(+). It catalyses the reaction protoporphyrin IX(in) + ATP + H2O = protoporphyrin IX(out) + ADP + phosphate + H(+). The enzyme catalyses coproporphyrin I(in) + ATP + H2O = coproporphyrin I(out) + ADP + phosphate + H(+). The catalysed reaction is uroporphyrin I(in) + ATP + H2O = uroporphyrin I(out) + ADP + phosphate + H(+). It carries out the reaction uroporphyrin III(in) + ATP + H2O = uroporphyrin III(out) + ADP + phosphate + H(+). In terms of biological role, ATP-dependent transporter that catalyzes the transport of a broad-spectrum of porphyrins from the cytoplasm to the extracellular space through the plasma membrane or into the vesicle lumen. May also function as an ATP-dependent importer of porphyrins from the cytoplasm into the mitochondria, in turn may participate in the de novo heme biosynthesis regulation and in the coordination of heme and iron homeostasis during phenylhydrazine stress. May also play a key role in the early steps of melanogenesis producing PMEL amyloid fibrils. In vitro, it confers to cells a resistance to toxic metal such as arsenic and cadmium and against chemotherapeutics agent such as 5-fluorouracil, SN-38 and vincristin. In addition may play a role in the transition metal homeostasis. In Xenopus tropicalis (Western clawed frog), this protein is ATP-binding cassette sub-family B member 6 (abcb6).